A 185-amino-acid polypeptide reads, in one-letter code: Probable nicotinate-nucleotide adenylyltransferase (185 aa).

This sequence belongs to the NadD family.

The catalysed reaction is nicotinate beta-D-ribonucleotide + ATP + H(+) = deamido-NAD(+) + diphosphate. It functions in the pathway cofactor biosynthesis; NAD(+) biosynthesis; deamido-NAD(+) from nicotinate D-ribonucleotide: step 1/1. Its function is as follows. Catalyzes the reversible adenylation of nicotinate mononucleotide (NaMN) to nicotinic acid adenine dinucleotide (NaAD). In Cereibacter sphaeroides (strain ATCC 17025 / ATH 2.4.3) (Rhodobacter sphaeroides), this protein is Probable nicotinate-nucleotide adenylyltransferase.